Consider the following 481-residue polypeptide: Cysteine--tRNA ligase (481 aa).

Residue Cys29 coordinates Zn(2+). The short motif at 31–41 (VTVYDYCHIGH) is the 'HIGH' region element. The Zn(2+) site is built by Cys209, His234, and Glu238. Positions 266–270 (KMSKS) match the 'KMSKS' region motif. An ATP-binding site is contributed by Lys269.

Belongs to the class-I aminoacyl-tRNA synthetase family. In terms of assembly, monomer. Requires Zn(2+) as cofactor.

The protein localises to the cytoplasm. It carries out the reaction tRNA(Cys) + L-cysteine + ATP = L-cysteinyl-tRNA(Cys) + AMP + diphosphate. This is Cysteine--tRNA ligase from Syntrophotalea carbinolica (strain DSM 2380 / NBRC 103641 / GraBd1) (Pelobacter carbinolicus).